The sequence spans 121 residues: Trypsin/alpha-amylase inhibitor CMX2 (121 aa).

Positions 1 to 24 (MAFKHQLILSTAILLAVLAAASAS) are cleaved as a signal peptide.

This sequence belongs to the protease inhibitor I6 (cereal trypsin/alpha-amylase inhibitor) family.

The protein localises to the secreted. The protein is Trypsin/alpha-amylase inhibitor CMX2 of Triticum aestivum (Wheat).